Reading from the N-terminus, the 97-residue chain is Venom peptide HsVx1 (97 aa).

A signal peptide spans 1-20 (MSHLRIAVTFLCTLFALTAG).

This sequence belongs to the scorpion La1-like peptide family. In terms of processing, contains 4 disulfide bonds. In terms of tissue distribution, expressed by the venom gland.

It localises to the secreted. The chain is Venom peptide HsVx1 from Heterometrus spinifer (Asia giant forest scorpion).